Reading from the N-terminus, the 487-residue chain is Bifunctional protein GlmU (487 aa).

The pyrophosphorylase stretch occupies residues 1–235 (MSHSPTPLAA…PEEASGVNDR (235 aa)). Residues 13–16 (LAAG), Lys27, Gln82, 87–88 (GT), 110–112 (SGD), Gly147, Glu162, Asn177, and Asn233 each bind UDP-N-acetyl-alpha-D-glucosamine. Asp112 serves as a coordination point for Mg(2+). Asn233 contributes to the Mg(2+) binding site. The tract at residues 236 to 256 (EELARAGRVLLRRRASELMRS) is linker. Positions 257–487 (GVTIEDPERF…ADSPRGGRAS (231 aa)) are N-acetyltransferase. UDP-N-acetyl-alpha-D-glucosamine contacts are provided by Arg339 and Lys357. Residue His369 is the Proton acceptor of the active site. The UDP-N-acetyl-alpha-D-glucosamine site is built by Tyr372 and Asn383. Residues Ala386, 392–393 (NY), Ser411, Ala429, and Arg446 contribute to the acetyl-CoA site. Residues 453–487 (EGWVARRKAEAQNKGAAEAAPAPSPADSPRGGRAS) form a disordered region. The span at 468 to 481 (AAEAAPAPSPADSP) shows a compositional bias: low complexity.

This sequence in the N-terminal section; belongs to the N-acetylglucosamine-1-phosphate uridyltransferase family. It in the C-terminal section; belongs to the transferase hexapeptide repeat family. In terms of assembly, homotrimer. Requires Mg(2+) as cofactor.

It is found in the cytoplasm. It catalyses the reaction alpha-D-glucosamine 1-phosphate + acetyl-CoA = N-acetyl-alpha-D-glucosamine 1-phosphate + CoA + H(+). It carries out the reaction N-acetyl-alpha-D-glucosamine 1-phosphate + UTP + H(+) = UDP-N-acetyl-alpha-D-glucosamine + diphosphate. It participates in nucleotide-sugar biosynthesis; UDP-N-acetyl-alpha-D-glucosamine biosynthesis; N-acetyl-alpha-D-glucosamine 1-phosphate from alpha-D-glucosamine 6-phosphate (route II): step 2/2. It functions in the pathway nucleotide-sugar biosynthesis; UDP-N-acetyl-alpha-D-glucosamine biosynthesis; UDP-N-acetyl-alpha-D-glucosamine from N-acetyl-alpha-D-glucosamine 1-phosphate: step 1/1. Its pathway is bacterial outer membrane biogenesis; LPS lipid A biosynthesis. Its function is as follows. Catalyzes the last two sequential reactions in the de novo biosynthetic pathway for UDP-N-acetylglucosamine (UDP-GlcNAc). The C-terminal domain catalyzes the transfer of acetyl group from acetyl coenzyme A to glucosamine-1-phosphate (GlcN-1-P) to produce N-acetylglucosamine-1-phosphate (GlcNAc-1-P), which is converted into UDP-GlcNAc by the transfer of uridine 5-monophosphate (from uridine 5-triphosphate), a reaction catalyzed by the N-terminal domain. The chain is Bifunctional protein GlmU from Anaeromyxobacter sp. (strain Fw109-5).